The following is a 429-amino-acid chain: Gamma-glutamyl phosphate reductase (429 aa).

It belongs to the gamma-glutamyl phosphate reductase family.

It localises to the cytoplasm. It carries out the reaction L-glutamate 5-semialdehyde + phosphate + NADP(+) = L-glutamyl 5-phosphate + NADPH + H(+). It participates in amino-acid biosynthesis; L-proline biosynthesis; L-glutamate 5-semialdehyde from L-glutamate: step 2/2. Catalyzes the NADPH-dependent reduction of L-glutamate 5-phosphate into L-glutamate 5-semialdehyde and phosphate. The product spontaneously undergoes cyclization to form 1-pyrroline-5-carboxylate. The sequence is that of Gamma-glutamyl phosphate reductase from Methylocella silvestris (strain DSM 15510 / CIP 108128 / LMG 27833 / NCIMB 13906 / BL2).